Reading from the N-terminus, the 98-residue chain is Large ribosomal subunit protein uL23 (98 aa).

It belongs to the universal ribosomal protein uL23 family. In terms of assembly, part of the 50S ribosomal subunit. Contacts protein L29, and trigger factor when it is bound to the ribosome.

In terms of biological role, one of the early assembly proteins it binds 23S rRNA. One of the proteins that surrounds the polypeptide exit tunnel on the outside of the ribosome. Forms the main docking site for trigger factor binding to the ribosome. This chain is Large ribosomal subunit protein uL23, found in Ruegeria pomeroyi (strain ATCC 700808 / DSM 15171 / DSS-3) (Silicibacter pomeroyi).